The chain runs to 137 residues: NADH dehydrogenase [ubiquinone] 1 beta subcomplex subunit 7 (137 aa).

Gly-2 carries N-myristoyl glycine lipidation. The CHCH domain maps to Arg-56–Arg-98. Positions Cys-59–Cys-69 match the Cx9C motif 1 motif. 2 cysteine pairs are disulfide-bonded: Cys-59–Cys-90 and Cys-69–Cys-80. Residue Ser-73 is modified to Phosphoserine. The Cx9C motif 2 signature appears at Cys-80 to Cys-90. The disordered stretch occupies residues Lys-113–Leu-137.

This sequence belongs to the complex I NDUFB7 subunit family. In terms of assembly, complex I is composed of 45 different subunits.

It localises to the mitochondrion inner membrane. It is found in the mitochondrion intermembrane space. Functionally, accessory subunit of the mitochondrial membrane respiratory chain NADH dehydrogenase (Complex I), that is believed not to be involved in catalysis. Complex I functions in the transfer of electrons from NADH to the respiratory chain. The immediate electron acceptor for the enzyme is believed to be ubiquinone. This chain is NADH dehydrogenase [ubiquinone] 1 beta subcomplex subunit 7 (NDUFB7), found in Homo sapiens (Human).